A 548-amino-acid chain; its full sequence is Acetolactate synthase isozyme 2 large subunit (548 aa).

Residue Glu-47 coordinates thiamine diphosphate. FAD-binding positions include Arg-149, His-251–Arg-272, and Asp-294–Asp-313. The interval Gln-377–Arg-457 is thiamine pyrophosphate binding. Residues Asp-428 and Asn-455 each coordinate Mg(2+).

This sequence belongs to the TPP enzyme family. In terms of assembly, tetramer of two large (IlvG) and two small (IlvM) chains. Requires FAD as cofactor. It depends on Mg(2+) as a cofactor. Thiamine diphosphate is required as a cofactor.

It carries out the reaction 2 pyruvate + H(+) = (2S)-2-acetolactate + CO2. Its pathway is amino-acid biosynthesis; L-isoleucine biosynthesis; L-isoleucine from 2-oxobutanoate: step 1/4. The protein operates within amino-acid biosynthesis; L-valine biosynthesis; L-valine from pyruvate: step 1/4. Its activity is regulated as follows. Inhibited by the herbicides chlorimuron ethyl, chlorsulfuron and imazapyr. In terms of biological role, catalyzes the first step in the biosynthesis of branched-chain amino acids. This is Acetolactate synthase isozyme 2 large subunit (ilvG) from Escherichia coli (strain K12).